The sequence spans 126 residues: C-X-C motif chemokine 9 (126 aa).

A signal peptide spans 1–21 (MKSAVLFLLGIIFLEQCGVRG). 2 disulfide bridges follow: C30-C57 and C32-C73. N58 carries an N-linked (GlcNAc...) asparagine glycan. Positions 91-126 (KISQKKKQKRGKKHQKNMKNRKPKTPQSRRRSRKTT) are disordered. The segment covering 93 to 126 (SQKKKQKRGKKHQKNMKNRKPKTPQSRRRSRKTT) has biased composition (basic residues).

This sequence belongs to the intercrine alpha (chemokine CxC) family.

The protein localises to the secreted. May be a cytokine that affects the growth, movement, or activation state of cells that participate in immune and inflammatory response. This chain is C-X-C motif chemokine 9 (Cxcl9), found in Mus musculus (Mouse).